The primary structure comprises 185 residues: Ribosome-recycling factor (185 aa).

Belongs to the RRF family.

Its subcellular location is the cytoplasm. Responsible for the release of ribosomes from messenger RNA at the termination of protein biosynthesis. May increase the efficiency of translation by recycling ribosomes from one round of translation to another. In Symbiobacterium thermophilum (strain DSM 24528 / JCM 14929 / IAM 14863 / T), this protein is Ribosome-recycling factor.